The chain runs to 102 residues: Small ribosomal subunit protein eS24 (102 aa).

This sequence belongs to the eukaryotic ribosomal protein eS24 family.

This Methanococcus maripaludis (strain C7 / ATCC BAA-1331) protein is Small ribosomal subunit protein eS24.